The primary structure comprises 379 residues: Armadillo repeat-containing X-linked protein 3 (379 aa).

At 1–6 the chain is on the mitochondrial intermembrane side; that stretch reads MGYARK. Mitochondrion outer membrane (MOM)-targeting sequence stretches follow at residues 1–6 and 26–37; these read MGYARK and RLTRGRKQNKEK. The chain crosses the membrane as a helical; Signal-anchor span at residues 7–29; sequence VGWVTAGLVIGAGACYCIYRLTR. Topologically, residues 30–379 are cytoplasmic; it reads GRKQNKEKMA…TERMFPKSQE (350 aa). The segment at 34–69 is disordered; it reads NKEKMAEGGPGDVEDAGDCSGARYNDWSDDDDDSNE. Residues Ser61, Ser67, and Ser72 each carry the phosphoserine modification. Residues 89-98 are nuclear localization signal; it reads RARARARARA. A Phosphoserine modification is found at Ser110. ARM repeat units follow at residues 111–151, 153–192, and 233–272; these read PNSD…NNAA, AFNR…NLSV, and VTNE…NLAE.

It belongs to the eutherian X-chromosome-specific Armcx family. Interacts (via ARM domain) with MIRO1, MIRO2 and TRAK2. The interaction with Miro is calcium-dependent. Interacts with Sox10.

Its subcellular location is the mitochondrion outer membrane. It localises to the cytoplasm. It is found in the nucleus. Its function is as follows. Regulates mitochondrial aggregation and transport in axons in living neurons. May link mitochondria to the Trak2-kinesin motor complex via its interaction with Miro and Trak2. Mitochondrial distribution and dynamics is regulated through Armcx3 protein degradation, which is promoted by PCK and negatively regulated by Wnt1. Enhances the Sox10-mediated transactivation of the neuronal acetylcholine receptor subunit alpha-3 and beta-4 subunit gene promoters. This is Armadillo repeat-containing X-linked protein 3 (Armcx3) from Rattus norvegicus (Rat).